A 534-amino-acid polypeptide reads, in one-letter code: Prolyl 4-hydroxylase subunit alpha-1 (534 aa).

Positions 1–17 (MIWGVLMMGILLPQCSA) are cleaved as a signal peptide. Asn-113 carries an N-linked (GlcNAc...) asparagine glycan. A TPR repeat occupies 205 to 238 (VSVLDYLSYAVYQQGDLDKALLLTKKLLELDPEH). Asn-259 carries an N-linked (GlcNAc...) asparagine glycan. The Fe2OG dioxygenase domain occupies 411–519 (TAEELQVANY…KWVSNKWLHE (109 aa)). Fe cation contacts are provided by His-429, Asp-431, and His-500. Lys-510 is a binding site for 2-oxoglutarate.

It belongs to the P4HA family. As to quaternary structure, heterotetramer of two alpha-1 chains and two beta chains (P4HB)(the beta chain is the multi-functional PDI), where P4HB plays the role of a structural subunit; this tetramer catalyzes the formation of 4-hydroxyproline in collagen. It depends on Fe(2+) as a cofactor. The cofactor is L-ascorbate.

It localises to the endoplasmic reticulum lumen. It carries out the reaction L-prolyl-[collagen] + 2-oxoglutarate + O2 = trans-4-hydroxy-L-prolyl-[collagen] + succinate + CO2. Catalyzes the post-translational formation of 4-hydroxyproline in -Xaa-Pro-Gly- sequences in collagens and other proteins. The polypeptide is Prolyl 4-hydroxylase subunit alpha-1 (P4ha1) (Rattus norvegicus (Rat)).